The chain runs to 63 residues: Beta-defensin 35 (63 aa).

A signal peptide spans 1-23; the sequence is MPQTFFVFCFLFFVFLQLFPGTG. Disulfide bonds link Cys31-Cys58, Cys38-Cys52, and Cys42-Cys59.

It belongs to the beta-defensin family. Expressed in testis, epididymis (caput, corpus and cauda), kidney and neonatal and adult brain.

The protein resides in the secreted. Has antibacterial activity. The sequence is that of Beta-defensin 35 (Defb35) from Mus musculus (Mouse).